Reading from the N-terminus, the 29-residue chain is VSCEDCPDHCSTQKARAKCDNDKCVCEPK.

Disulfide bonds link cysteine 3–cysteine 19, cysteine 6–cysteine 24, and cysteine 10–cysteine 26.

The protein belongs to the short scorpion toxin superfamily. Potassium channel inhibitor family. Alpha-KTx 08 subfamily. Expressed by the venom gland.

It is found in the secreted. In terms of biological role, inhibits voltage-gated potassium channels. The sequence is that of Potassium channel toxin alpha-KTx 8.4 from Leiurus hebraeus (Hebrew deathstalker scorpion).